The chain runs to 416 residues: D-amino acid dehydrogenase (416 aa).

3 to 17 contacts FAD; sequence VIVLGAGIIGVTSAY.

This sequence belongs to the DadA oxidoreductase family. The cofactor is FAD.

It catalyses the reaction a D-alpha-amino acid + A + H2O = a 2-oxocarboxylate + AH2 + NH4(+). It functions in the pathway amino-acid degradation; D-alanine degradation; NH(3) and pyruvate from D-alanine: step 1/1. Oxidative deamination of D-amino acids. This chain is D-amino acid dehydrogenase, found in Sinorhizobium medicae (strain WSM419) (Ensifer medicae).